We begin with the raw amino-acid sequence, 732 residues long: Polyribonucleotide nucleotidyltransferase (732 aa).

Mg(2+) is bound by residues aspartate 503 and aspartate 509. The region spanning 570–629 (PRLTSIQIPVDAIGLIIGKGGETIRSITEETGAEINIEDDGTVTIACSSPEGTNAAVETI) is the KH domain. The S1 motif domain occupies 639–713 (GNTYLGKVRD…GKNRFALSIK (75 aa)). The interval 710 to 732 (LSIKAVESEPEKSDENKAGTEGN) is disordered. Over residues 715–732 (VESEPEKSDENKAGTEGN) the composition is skewed to basic and acidic residues.

It belongs to the polyribonucleotide nucleotidyltransferase family. Mg(2+) serves as cofactor.

It localises to the cytoplasm. The catalysed reaction is RNA(n+1) + phosphate = RNA(n) + a ribonucleoside 5'-diphosphate. Involved in mRNA degradation. Catalyzes the phosphorolysis of single-stranded polyribonucleotides processively in the 3'- to 5'-direction. The sequence is that of Polyribonucleotide nucleotidyltransferase from Chlorobium phaeobacteroides (strain DSM 266 / SMG 266 / 2430).